Consider the following 155-residue polypeptide: Small ribosomal subunit protein uS7cz/uS7cy (155 aa).

It belongs to the universal ribosomal protein uS7 family. Part of the 30S ribosomal subunit.

The protein localises to the plastid. It localises to the chloroplast. Functionally, one of the primary rRNA binding proteins, it binds directly to 16S rRNA where it nucleates assembly of the head domain of the 30S subunit. The chain is Small ribosomal subunit protein uS7cz/uS7cy (rps7-A) from Daucus carota (Wild carrot).